Consider the following 76-residue polypeptide: Large ribosomal subunit protein uL29 (76 aa).

The protein belongs to the universal ribosomal protein uL29 family.

The sequence is that of Large ribosomal subunit protein uL29 from Corynebacterium efficiens (strain DSM 44549 / YS-314 / AJ 12310 / JCM 11189 / NBRC 100395).